The following is a 162-amino-acid chain: Phosphopantetheine adenylyltransferase (162 aa).

A substrate-binding site is contributed by serine 11. Residues 11-12 and histidine 19 contribute to the ATP site; that span reads SF. The substrate site is built by lysine 43, leucine 75, and arginine 89. ATP-binding positions include 90–92, glutamate 100, and 125–131; these read GLR and YSYLSSS.

Belongs to the bacterial CoaD family. In terms of assembly, homohexamer. Mg(2+) serves as cofactor.

It localises to the cytoplasm. It catalyses the reaction (R)-4'-phosphopantetheine + ATP + H(+) = 3'-dephospho-CoA + diphosphate. It functions in the pathway cofactor biosynthesis; coenzyme A biosynthesis; CoA from (R)-pantothenate: step 4/5. Its function is as follows. Reversibly transfers an adenylyl group from ATP to 4'-phosphopantetheine, yielding dephospho-CoA (dPCoA) and pyrophosphate. In Geotalea uraniireducens (strain Rf4) (Geobacter uraniireducens), this protein is Phosphopantetheine adenylyltransferase.